The sequence spans 163 residues: Protein-export protein SecB (163 aa).

The protein belongs to the SecB family. Homotetramer, a dimer of dimers. One homotetramer interacts with 1 SecA dimer.

It is found in the cytoplasm. Its function is as follows. One of the proteins required for the normal export of preproteins out of the cell cytoplasm. It is a molecular chaperone that binds to a subset of precursor proteins, maintaining them in a translocation-competent state. It also specifically binds to its receptor SecA. The chain is Protein-export protein SecB from Brucella anthropi (strain ATCC 49188 / DSM 6882 / CCUG 24695 / JCM 21032 / LMG 3331 / NBRC 15819 / NCTC 12168 / Alc 37) (Ochrobactrum anthropi).